We begin with the raw amino-acid sequence, 325 residues long: Probable cell division protein WhiA (325 aa).

Positions 273–306 (SLEELGALADPPLTKDAVAGRIRRLLALADKRAN) form a DNA-binding region, H-T-H motif.

This sequence belongs to the WhiA family.

Functionally, involved in cell division and chromosome segregation. This is Probable cell division protein WhiA from Frankia casuarinae (strain DSM 45818 / CECT 9043 / HFP020203 / CcI3).